Consider the following 1141-residue polypeptide: DNA polymerase 120R (1141 aa).

This sequence belongs to the DNA polymerase type-B family.

The enzyme catalyses DNA(n) + a 2'-deoxyribonucleoside 5'-triphosphate = DNA(n+1) + diphosphate. In terms of biological role, DNA-directed DNA polymerase involved in viral DNA replication. In Invertebrate iridescent virus 3 (IIV-3), this protein is DNA polymerase 120R.